The primary structure comprises 141 residues: Ribosomal RNA large subunit methyltransferase H (141 aa).

Glycine 88 lines the S-adenosyl-L-methionine pocket.

Belongs to the RNA methyltransferase RlmH family. As to quaternary structure, homodimer.

It localises to the cytoplasm. The enzyme catalyses pseudouridine(1915) in 23S rRNA + S-adenosyl-L-methionine = N(3)-methylpseudouridine(1915) in 23S rRNA + S-adenosyl-L-homocysteine + H(+). Specifically methylates the pseudouridine at position 1915 (m3Psi1915) in 23S rRNA. This chain is Ribosomal RNA large subunit methyltransferase H, found in Novosphingobium aromaticivorans (strain ATCC 700278 / DSM 12444 / CCUG 56034 / CIP 105152 / NBRC 16084 / F199).